Consider the following 558-residue polypeptide: MRSDAIKKGHLKAPNRSLLRACGLKDEDFDKPFIGVANSYIDIIPGHYFLNDYAKIIKDEIRKNGCVPFEFNTIGIDDGIAMGHEGMLYSLPSREIIANSIETVMNAHQLDALICIPNCDKITPGMLMGALRVNVPTIFVSGGPMASGVTKKGEKISLSSVFEAVGAYEAKKISEEEFKDIECSACPSGGSCSGMFTANSMNTLCEAMGIALEGNGTILALSKEREELLRKAARRICEIALDERFKIRNIITQKAVRNAMIVDMAMGGSSNTVLHMLAISREAGVALDIKDLNFISSKVAHIAKIAPSLNSVYMDDIHKAGGVSAVMAEISSRQGHILELDALTITGESLEERLKNAKIKDENIIRKVDNAYSKVGGLAILFGNLAEQGCVIKTAGIIGERKFKGKAVCFNSQDEAIKGIIKGKVQKGNVCVIRYEGPKGGPGMQEMLSPTSLLMGMGLGADVALITDGRFSGATRGLSIGHISPEAAEGGLIGLLKDGDEIEIDVDAYTIHANLSEKEITQRKKEFVLPQKEVPSRWLRMYQKLVSNASKGAVLDME.

Residue aspartate 78 participates in Mg(2+) binding. Cysteine 119 contacts [2Fe-2S] cluster. Residues aspartate 120 and lysine 121 each contribute to the Mg(2+) site. Residue lysine 121 is modified to N6-carboxylysine. A [2Fe-2S] cluster-binding site is contributed by cysteine 192. Glutamate 446 lines the Mg(2+) pocket. Serine 472 (proton acceptor) is an active-site residue.

The protein belongs to the IlvD/Edd family. Homodimer. [2Fe-2S] cluster serves as cofactor. The cofactor is Mg(2+).

The catalysed reaction is (2R)-2,3-dihydroxy-3-methylbutanoate = 3-methyl-2-oxobutanoate + H2O. It carries out the reaction (2R,3R)-2,3-dihydroxy-3-methylpentanoate = (S)-3-methyl-2-oxopentanoate + H2O. Its pathway is amino-acid biosynthesis; L-isoleucine biosynthesis; L-isoleucine from 2-oxobutanoate: step 3/4. It functions in the pathway amino-acid biosynthesis; L-valine biosynthesis; L-valine from pyruvate: step 3/4. In terms of biological role, functions in the biosynthesis of branched-chain amino acids. Catalyzes the dehydration of (2R,3R)-2,3-dihydroxy-3-methylpentanoate (2,3-dihydroxy-3-methylvalerate) into 2-oxo-3-methylpentanoate (2-oxo-3-methylvalerate) and of (2R)-2,3-dihydroxy-3-methylbutanoate (2,3-dihydroxyisovalerate) into 2-oxo-3-methylbutanoate (2-oxoisovalerate), the penultimate precursor to L-isoleucine and L-valine, respectively. This is Dihydroxy-acid dehydratase from Campylobacter jejuni subsp. doylei (strain ATCC BAA-1458 / RM4099 / 269.97).